A 329-amino-acid polypeptide reads, in one-letter code: Biotin synthase (329 aa).

Positions 46-275 constitute a Radical SAM core domain; the sequence is FFGRRLKLVR…LNPKAELRAS (230 aa). [4Fe-4S] cluster contacts are provided by C64, C68, and C71. 4 residues coordinate [2Fe-2S] cluster: C108, C140, C200, and R273.

It belongs to the radical SAM superfamily. Biotin synthase family. In terms of assembly, homodimer. Requires [4Fe-4S] cluster as cofactor. The cofactor is [2Fe-2S] cluster.

It catalyses the reaction (4R,5S)-dethiobiotin + (sulfur carrier)-SH + 2 reduced [2Fe-2S]-[ferredoxin] + 2 S-adenosyl-L-methionine = (sulfur carrier)-H + biotin + 2 5'-deoxyadenosine + 2 L-methionine + 2 oxidized [2Fe-2S]-[ferredoxin]. Its pathway is cofactor biosynthesis; biotin biosynthesis; biotin from 7,8-diaminononanoate: step 2/2. Catalyzes the conversion of dethiobiotin (DTB) to biotin by the insertion of a sulfur atom into dethiobiotin via a radical-based mechanism. This chain is Biotin synthase, found in Thermus thermophilus (strain ATCC BAA-163 / DSM 7039 / HB27).